Reading from the N-terminus, the 502-residue chain is Serine/threonine-protein kinase SKS1 (502 aa).

The Protein kinase domain maps to F10–T338. ATP is bound by residues I16–V24 and K39. D186 serves as the catalytic Proton acceptor. 2 stretches are compositionally biased toward low complexity: residues Q376–E391 and E399–Q410. A disordered region spans residues Q376–N439. A compositionally biased stretch (acidic residues) spans Q411–S420.

The protein belongs to the protein kinase superfamily. Ser/Thr protein kinase family.

It catalyses the reaction L-seryl-[protein] + ATP = O-phospho-L-seryl-[protein] + ADP + H(+). The enzyme catalyses L-threonyl-[protein] + ATP = O-phospho-L-threonyl-[protein] + ADP + H(+). Functionally, may have a role in glucose regulation. This is Serine/threonine-protein kinase SKS1 (SKS1) from Saccharomyces cerevisiae (strain ATCC 204508 / S288c) (Baker's yeast).